The chain runs to 437 residues: Serine--tRNA ligase (437 aa).

Residue 244–246 (TAE) participates in L-serine binding. 275 to 277 (RSE) contacts ATP. Position 298 (E298) interacts with L-serine. 362-365 (EISS) is a binding site for ATP. Residue S397 participates in L-serine binding.

This sequence belongs to the class-II aminoacyl-tRNA synthetase family. Type-1 seryl-tRNA synthetase subfamily. As to quaternary structure, homodimer. The tRNA molecule binds across the dimer.

Its subcellular location is the cytoplasm. The enzyme catalyses tRNA(Ser) + L-serine + ATP = L-seryl-tRNA(Ser) + AMP + diphosphate + H(+). It carries out the reaction tRNA(Sec) + L-serine + ATP = L-seryl-tRNA(Sec) + AMP + diphosphate + H(+). The protein operates within aminoacyl-tRNA biosynthesis; selenocysteinyl-tRNA(Sec) biosynthesis; L-seryl-tRNA(Sec) from L-serine and tRNA(Sec): step 1/1. Functionally, catalyzes the attachment of serine to tRNA(Ser). Is also able to aminoacylate tRNA(Sec) with serine, to form the misacylated tRNA L-seryl-tRNA(Sec), which will be further converted into selenocysteinyl-tRNA(Sec). The polypeptide is Serine--tRNA ligase (Nitrosomonas eutropha (strain DSM 101675 / C91 / Nm57)).